A 186-amino-acid polypeptide reads, in one-letter code: MIALFNKLLDWFKALFWKEEMELTLVGLQYSGKTTFVNVIASGQFNEDMIPTVGFNMRKITKGNVTIKLWDIGGQPRFRSMWERYCRGVSAIVYMVDAADQEKIEASKNELHNLLDKPQLQGIPVLVLGNKRDLPGALDEKELIEKMNLSAIQDREICCYSISCKEKDNIDITLQWLIQHSKSRRS.

Residues 1–19 (MIALFNKLLDWFKALFWKE) constitute an intramembrane region (note=Mediates targeting to membranes). Residues 29 to 35 (QYSGKTT), 71 to 75 (DIGGQ), and 130 to 133 (NKRD) contribute to the GTP site.

Belongs to the small GTPase superfamily. Arf family. In terms of assembly, interacts with PLEKHM1. When GTP-bound, interacts with RUFY3 and RUFY4, but not with RUFY1, nor RUFY2. Ubiquitously expressed.

It is found in the late endosome membrane. The protein localises to the lysosome membrane. It localises to the cytoplasm. The protein resides in the cytoskeleton. Its subcellular location is the spindle. It is found in the cell projection. The protein localises to the axon. It localises to the synapse. Functionally, plays a role in lysosome motility. In neurons, mediates the anterograde axonal long-range transport of presynaptic lysosome-related vesicles required for presynaptic biogenesis and synaptic function. May play a role in chromosome segregation. The protein is ADP-ribosylation factor-like protein 8A (ARL8A) of Homo sapiens (Human).